The primary structure comprises 584 residues: Interferon regulatory factor 2-binding protein 1 (584 aa).

Residues 60 to 127 form a disordered region; the sequence is VLPEGRSPGP…SGRLPLPSPA (68 aa). A phosphoserine mark is found at Ser-66 and Ser-125. Position 177 is an omega-N-methylarginine (Arg-177). A Phosphoserine modification is found at Ser-186. Residues 197 to 217 adopt a coiled-coil conformation; that stretch reads EKEKQQRNADCLAELNEAMRG. Lys-227 participates in a covalent cross-link: Glycyl lysine isopeptide (Lys-Gly) (interchain with G-Cter in SUMO2). The disordered stretch occupies residues 346-420; sequence PAEALPQQYP…PYSAETPGVP (75 aa). Pro residues predominate over residues 354–369; sequence YPEPAPAALCGPPPRA. Ser-371, Ser-384, Ser-421, and Ser-436 each carry phosphoserine. The disordered stretch occupies residues 433–495; sequence LGHSPKDPGG…VSGGGSGTGA (63 aa). A Glycyl lysine isopeptide (Lys-Gly) (interchain with G-Cter in SUMO2) cross-link involves residue Lys-438. The segment covering 449 to 463 has biased composition (low complexity); the sequence is AGGASPAASSTAQPP. Ser-453 and Ser-457 each carry phosphoserine. An RING-type; degenerate zinc finger spans residues 503 to 550; that stretch reads CTLCRERLEDTHFVQCPSVPGHKFCFPCSREFIKAQGPAGEVYCPSGD. The interval 503-550 is cys-rich; it reads CTLCRERLEDTHFVQCPSVPGHKFCFPCSREFIKAQGPAGEVYCPSGD.

It belongs to the IRF2BP family. Interacts with IRF2. Part of a corepressor complex containing IRF2 and IRF2BP2. Interacts with JDP2.

The protein resides in the nucleus. The enzyme catalyses S-ubiquitinyl-[E2 ubiquitin-conjugating enzyme]-L-cysteine + [acceptor protein]-L-lysine = [E2 ubiquitin-conjugating enzyme]-L-cysteine + N(6)-ubiquitinyl-[acceptor protein]-L-lysine.. Acts as a transcriptional corepressor in a IRF2-dependent manner; this repression is not mediated by histone deacetylase activities. May act as an E3 ligase towards JDP2, enhancing its polyubiquitination. Represses ATF2-dependent transcriptional activation. The protein is Interferon regulatory factor 2-binding protein 1 (IRF2BP1) of Homo sapiens (Human).